We begin with the raw amino-acid sequence, 20 residues long: AXFQKIKVANPVVELDGDEM.

This sequence belongs to the isocitrate and isopropylmalate dehydrogenases family. Requires Mn(2+) as cofactor. The cofactor is Mg(2+).

The protein resides in the cytoplasm. The catalysed reaction is D-threo-isocitrate + NADP(+) = 2-oxoglutarate + CO2 + NADPH. In Naegleria fowleri (Brain eating amoeba), this protein is Isocitrate dehydrogenase [NADP].